Consider the following 257-residue polypeptide: Mediator of RNA polymerase II transcription subunit 7 (257 aa).

The disordered stretch occupies residues 33-74 (EWQRQQNDEEIETKQEEADDKDEKDNEKQNETQDTVPPGELR). Positions 44–63 (ETKQEEADDKDEKDNEKQNE) are enriched in basic and acidic residues.

Belongs to the Mediator complex subunit 7 family. Component of the Mediator complex.

The protein resides in the nucleus. In terms of biological role, component of the Mediator complex, a coactivator involved in the regulated transcription of nearly all RNA polymerase II-dependent genes. Mediator functions as a bridge to convey information from gene-specific regulatory proteins to the basal RNA polymerase II transcription machinery. Mediator is recruited to promoters by direct interactions with regulatory proteins and serves as a scaffold for the assembly of a functional preinitiation complex with RNA polymerase II and the general transcription factors. The chain is Mediator of RNA polymerase II transcription subunit 7 (MED7) from Scheffersomyces stipitis (strain ATCC 58785 / CBS 6054 / NBRC 10063 / NRRL Y-11545) (Yeast).